Consider the following 70-residue polypeptide: Guanine nucleotide-binding protein G(I)/G(S)/G(O) subunit gamma-8 (70 aa).

C67 carries the post-translational modification Cysteine methyl ester. The S-geranylgeranyl cysteine moiety is linked to residue C67. A propeptide spans 68–70 (removed in mature form); sequence VLL.

Belongs to the G protein gamma family. As to quaternary structure, g proteins are composed of 3 units, alpha, beta and gamma.

It localises to the cell membrane. Functionally, guanine nucleotide-binding proteins (G proteins) are involved as a modulator or transducer in various transmembrane signaling systems. The beta and gamma chains are required for the GTPase activity, for replacement of GDP by GTP, and for G protein-effector interaction. This is Guanine nucleotide-binding protein G(I)/G(S)/G(O) subunit gamma-8 (GNG8) from Homo sapiens (Human).